Consider the following 422-residue polypeptide: Histidinol dehydrogenase (422 aa).

NAD(+) contacts are provided by tyrosine 123, glutamine 183, and asparagine 206. 3 residues coordinate substrate: serine 229, glutamine 251, and histidine 254. The Zn(2+) site is built by glutamine 251 and histidine 254. Residues glutamate 320 and histidine 321 each act as proton acceptor in the active site. Residues histidine 321, aspartate 354, glutamate 408, and histidine 413 each coordinate substrate. Zn(2+) is bound at residue aspartate 354. Histidine 413 is a Zn(2+) binding site.

Belongs to the histidinol dehydrogenase family. Zn(2+) serves as cofactor.

The catalysed reaction is L-histidinol + 2 NAD(+) + H2O = L-histidine + 2 NADH + 3 H(+). It participates in amino-acid biosynthesis; L-histidine biosynthesis; L-histidine from 5-phospho-alpha-D-ribose 1-diphosphate: step 9/9. In terms of biological role, catalyzes the sequential NAD-dependent oxidations of L-histidinol to L-histidinaldehyde and then to L-histidine. The sequence is that of Histidinol dehydrogenase from Natronomonas pharaonis (strain ATCC 35678 / DSM 2160 / CIP 103997 / JCM 8858 / NBRC 14720 / NCIMB 2260 / Gabara) (Halobacterium pharaonis).